The following is a 337-amino-acid chain: uncharacterized protein (337 aa).

The disordered stretch occupies residues 291-314 (NKTRQCSNTKTTTKSTMTPINNGF). Low complexity predominate over residues 299–308 (TKTTTKSTMT).

This is an uncharacterized protein from Acanthamoeba polyphaga mimivirus (APMV).